We begin with the raw amino-acid sequence, 245 residues long: 5-oxoprolinase subunit A (245 aa).

It belongs to the LamB/PxpA family. Forms a complex composed of PxpA, PxpB and PxpC.

The enzyme catalyses 5-oxo-L-proline + ATP + 2 H2O = L-glutamate + ADP + phosphate + H(+). Functionally, catalyzes the cleavage of 5-oxoproline to form L-glutamate coupled to the hydrolysis of ATP to ADP and inorganic phosphate. The protein is 5-oxoprolinase subunit A of Yersinia pseudotuberculosis serotype O:1b (strain IP 31758).